We begin with the raw amino-acid sequence, 278 residues long: NAD-capped RNA hydrolase NudC (278 aa).

Arginine 84 contacts substrate. Positions 114 and 117 each coordinate Zn(2+). Residue glutamate 127 participates in substrate binding. Zn(2+) contacts are provided by cysteine 132 and cysteine 135. Substrate is bound at residue tyrosine 140. The region spanning 141–265 (PRLSPSMIVL…IARHLIDLYL (125 aa)) is the Nudix hydrolase domain. A divalent metal cation is bound by residues alanine 174, glutamate 190, and glutamate 194. The short motif at 175-196 (GFVEAGESVEQCVVREVREEVG) is the Nudix box element. Substrate is bound at residue 208–215 (QNWPFPHS). Residue glutamate 235 coordinates a divalent metal cation. Residue alanine 257 coordinates substrate.

Belongs to the Nudix hydrolase family. NudC subfamily. As to quaternary structure, homodimer. The cofactor is Mg(2+). Mn(2+) serves as cofactor. Requires Zn(2+) as cofactor.

It catalyses the reaction a 5'-end NAD(+)-phospho-ribonucleoside in mRNA + H2O = a 5'-end phospho-adenosine-phospho-ribonucleoside in mRNA + beta-nicotinamide D-ribonucleotide + 2 H(+). The enzyme catalyses NAD(+) + H2O = beta-nicotinamide D-ribonucleotide + AMP + 2 H(+). It carries out the reaction NADH + H2O = reduced beta-nicotinamide D-ribonucleotide + AMP + 2 H(+). In terms of biological role, mRNA decapping enzyme that specifically removes the nicotinamide adenine dinucleotide (NAD) cap from a subset of mRNAs by hydrolyzing the diphosphate linkage to produce nicotinamide mononucleotide (NMN) and 5' monophosphate mRNA. The NAD-cap is present at the 5'-end of some mRNAs and stabilizes RNA against 5'-processing. Has preference for mRNAs with a 5'-end purine. Catalyzes the hydrolysis of a broad range of dinucleotide pyrophosphates. The sequence is that of NAD-capped RNA hydrolase NudC from Pseudomonas aeruginosa (strain LESB58).